The sequence spans 207 residues: Dephospho-CoA kinase (207 aa).

Positions 5 to 203 (AVGLTGGIAC…ARYRALASVF (199 aa)) constitute a DPCK domain. 13–18 (ACGKSL) provides a ligand contact to ATP.

This sequence belongs to the CoaE family.

Its subcellular location is the cytoplasm. It catalyses the reaction 3'-dephospho-CoA + ATP = ADP + CoA + H(+). Its pathway is cofactor biosynthesis; coenzyme A biosynthesis; CoA from (R)-pantothenate: step 5/5. Functionally, catalyzes the phosphorylation of the 3'-hydroxyl group of dephosphocoenzyme A to form coenzyme A. The polypeptide is Dephospho-CoA kinase (Xylella fastidiosa (strain 9a5c)).